The chain runs to 228 residues: Ephrin-A5 (228 aa).

The first 20 residues, M1 to S20, serve as a signal peptide directing secretion. Residues A29 to N162 form the Ephrin RBD domain. A glycan (N-linked (GlcNAc...) asparagine) is linked at N37. 2 disulfides stabilise this stretch: C62-C102 and C90-C151. Residues E186 to A205 form a disordered region. Residues D190 to R200 are compositionally biased toward basic and acidic residues. The GPI-anchor amidated asparagine moiety is linked to residue N203. The propeptide at A204–L228 is removed in mature form.

It belongs to the ephrin family. As to quaternary structure, binds to the receptor tyrosine kinases EPHA2, EPHA3, EPHB1 and EPHB2. Interacts with EPHA8; activates EPHA8. Forms a ternary EFNA5-EPHA3-ADAM10 complex mediating EFNA5 extracellular domain shedding by ADAM10 which regulates the EFNA5-EPHA3 complex internalization and function. As to expression, expressed in brain, heart, placenta and lung.

It is found in the cell membrane. The protein resides in the membrane. Its subcellular location is the caveola. Cell surface GPI-bound ligand for Eph receptors, a family of receptor tyrosine kinases which are crucial for migration, repulsion and adhesion during neuronal, vascular and epithelial development. Binds promiscuously Eph receptors residing on adjacent cells, leading to contact-dependent bidirectional signaling into neighboring cells. The signaling pathway downstream of the receptor is referred to as forward signaling while the signaling pathway downstream of the ephrin ligand is referred to as reverse signaling. Induces compartmentalized signaling within a caveolae-like membrane microdomain when bound to the extracellular domain of its cognate receptor. This signaling event requires the activity of the Fyn tyrosine kinase. Activates the EPHA3 receptor to regulate cell-cell adhesion and cytoskeletal organization. With the receptor EPHA2 may regulate lens fiber cells shape and interactions and be important for lens transparency maintenance. May function actively to stimulate axon fasciculation. The interaction of EFNA5 with EPHA5 also mediates communication between pancreatic islet cells to regulate glucose-stimulated insulin secretion. Cognate/functional ligand for EPHA7, their interaction regulates brain development modulating cell-cell adhesion and repulsion. This Rattus norvegicus (Rat) protein is Ephrin-A5 (Efna5).